The sequence spans 103 residues: MQLFLRINMAQIIRATEFVRSFSDIMNRVYYKGESFDVQKGNHIVARITPAETKPSIAVRDLEEAFKNGPHLDPEDADQFMKDIEEIRRSTRQDIKKLVERWD.

Functionally, antitoxin component of a type II toxin-antitoxin (TA) system. Upon expression in E.coli neutralizes the effect of cognate toxin VapC1, partially inhibits the RNase activity of VapC1 in vitro. The polypeptide is Antitoxin VapB1 (vapB1) (Rickettsia felis (strain ATCC VR-1525 / URRWXCal2) (Rickettsia azadi)).